Here is a 474-residue protein sequence, read N- to C-terminus: Probable periplasmic serine endoprotease DegP-like (474 aa).

Residues 1–25 (MRNLKSVTPLLMAALLWGQSLLAQA) form the signal peptide. Active-site charge relay system residues include His-113, Asp-143, and Ser-216. Substrate contacts are provided by residues 214 to 216 (GNS) and 271 to 275 (LGVVI). 2 PDZ domains span residues 260 to 351 (LKAD…VRDG) and 357 to 463 (KVTI…LRQG).

This sequence belongs to the peptidase S1C family.

The protein localises to the periplasm. The enzyme catalyses Acts on substrates that are at least partially unfolded. The cleavage site P1 residue is normally between a pair of hydrophobic residues, such as Val-|-Val.. In terms of biological role, might be efficient in the degradation of transiently denatured and unfolded proteins which accumulate in the periplasm following stress conditions. In Ectopseudomonas mendocina (strain ymp) (Pseudomonas mendocina), this protein is Probable periplasmic serine endoprotease DegP-like.